Consider the following 168-residue polypeptide: Phospholipase A and acyltransferase 1 (168 aa).

The Cytoplasmic segment spans residues 1 to 138 (MAFNDCFSLN…GEGVSEQANR (138 aa)). The LRAT domain maps to 20–135 (LIEVFRPGYQ…LRYGEGVSEQ (116 aa)). Residue H30 is part of the active site. C119 serves as the catalytic Acyl-thioester intermediate. Residues 139-159 (AISTVEFVTAAVGVFSFLGLF) traverse the membrane as a helical segment. The Lumenal portion of the chain corresponds to 160–168 (PKGQRAKYY).

The protein belongs to the H-rev107 family. In terms of tissue distribution, abundantly expressed in testis, skeletal muscle, brain, and heart. Highly expressed in the testis, skeletal muscle, brain, heart, and thyroid.

It is found in the membrane. It localises to the cytoplasm. The protein localises to the nucleus. It carries out the reaction a 1,2-diacyl-sn-glycero-3-phosphocholine + H2O = a 1-acyl-sn-glycero-3-phosphocholine + a fatty acid + H(+). It catalyses the reaction a 1,2-diacyl-sn-glycero-3-phosphocholine + H2O = a 2-acyl-sn-glycero-3-phosphocholine + a fatty acid + H(+). The enzyme catalyses 1,2-dihexadecanoyl-sn-glycero-3-phosphocholine + H2O = 2-hexadecanoyl-sn-glycero-3-phosphocholine + hexadecanoate + H(+). The catalysed reaction is 1,2-dihexadecanoyl-sn-glycero-3-phosphocholine + H2O = 1-hexadecanoyl-sn-glycero-3-phosphocholine + hexadecanoate + H(+). It carries out the reaction 1-hexadecanoyl-2-(5Z,8Z,11Z,14Z-eicosatetraenoyl)-sn-glycero-3-phosphoethanolamine + H2O = 2-(5Z,8Z,11Z,14Z)-eicosatetraenoyl-sn-glycero-3-phosphoethanolamine + hexadecanoate + H(+). It catalyses the reaction 1-hexadecanoyl-2-(5Z,8Z,11Z,14Z-eicosatetraenoyl)-sn-glycero-3-phosphoethanolamine + H2O = 1-hexadecanoyl-sn-glycero-3-phosphoethanolamine + (5Z,8Z,11Z,14Z)-eicosatetraenoate + H(+). The enzyme catalyses 1,2-di-(9Z-octadecenoyl)-sn-glycero-3-phosphoethanolamine + 1,2-dihexadecanoyl-sn-glycero-3-phosphocholine = hexadecanoyl-sn-glycero-3-phosphocholine + N-hexadecanoyl-1,2-di-(9Z-octadecenoyl)-sn-glycero-3-phosphoethanolamine + H(+). The catalysed reaction is 1,2-dihexadecanoyl-sn-glycero-3-phosphocholine + a 2-acyl-sn-glycero-3-phosphocholine = a 1-hexadecanoyl-2-acyl-sn-glycero-3-phosphocholine + 2-hexadecanoyl-sn-glycero-3-phosphocholine. Its function is as follows. Exhibits both phospholipase A1/2 and acyltransferase activities. Shows phospholipase A1 (PLA1) and A2 (PLA2) activity, catalyzing the calcium-independent release of fatty acids from the sn-1 or sn-2 position of glycerophospholipids. Shows O-acyltransferase activity, catalyzing the transfer of a fatty acyl group from glycerophospholipid to the hydroxyl group of lysophospholipid. Shows N-acyltransferase activity, catalyzing the calcium-independent transfer of a fatty acyl group at the sn-1 position of phosphatidylcholine (PC) and other glycerophospholipids to the primary amine of phosphatidylethanolamine (PE), forming N-acylphosphatidylethanolamine (NAPE) which serves as precursor for N-acylethanolamines (NAEs). The protein is Phospholipase A and acyltransferase 1 of Homo sapiens (Human).